Consider the following 266-residue polypeptide: Putative zinc finger protein 034R (266 aa).

Residues 84–176 are disordered; the sequence is SPTKSVDKAA…GPKRDSTQQP (93 aa). Basic and acidic residues predominate over residues 88–100; the sequence is SVDKAAQKEKKMP. 2 stretches are compositionally biased toward polar residues: residues 105–119 and 160–176; these read KPTT…QGIL and GVSQ…TQQP. The C3H1-type zinc finger occupies 180–192; sequence CKSVLKQAKCYFG.

Belongs to the IIV-6 077L family.

The protein is Putative zinc finger protein 034R of Aedes vexans (Inland floodwater mosquito).